A 165-amino-acid chain; its full sequence is Thiol peroxidase (165 aa).

A Thioredoxin domain is found at 17–165 (PQVGEIVENF…NYEAALAVLA (149 aa)). Cysteine 59 functions as the Cysteine sulfenic acid (-SOH) intermediate in the catalytic mechanism. Cysteines 59 and 93 form a disulfide.

The protein belongs to the peroxiredoxin family. Tpx subfamily. In terms of assembly, homodimer.

The catalysed reaction is a hydroperoxide + [thioredoxin]-dithiol = an alcohol + [thioredoxin]-disulfide + H2O. In terms of biological role, thiol-specific peroxidase that catalyzes the reduction of hydrogen peroxide and organic hydroperoxides to water and alcohols, respectively. Plays a role in cell protection against oxidative stress by detoxifying peroxides. This chain is Thiol peroxidase, found in Haemophilus influenzae (strain ATCC 51907 / DSM 11121 / KW20 / Rd).